The chain runs to 543 residues: T-complex protein 1 subunit eta (543 aa).

An N-acetylmethionine modification is found at M1. G41 serves as a coordination point for ADP. G41 serves as a coordination point for ATP. Residue K67 is modified to N6-acetyllysine. D92 serves as a coordination point for Mg(2+). 6 residues coordinate ADP: G93, T94, T95, S96, S164, and S165. Residue G93 participates in ATP binding. S96 serves as a coordination point for ATP. 2 positions are modified to N6-acetyllysine: K250 and K320. The ATP site is built by R398 and G409. ADP is bound at residue G409. A Glycyl lysine isopeptide (Lys-Gly) (interchain with G-Cter in SUMO2) cross-link involves residue K430. ADP-binding residues include E494 and R499. Residue R499 coordinates ATP. The disordered stretch occupies residues 524-543 (RSTVDAPTAAGRGRGRGRPH). R535 is subject to Omega-N-methylarginine.

It belongs to the TCP-1 chaperonin family. As to quaternary structure, component of the chaperonin-containing T-complex (TRiC), a hexadecamer composed of two identical back-to-back stacked rings enclosing a protein folding chamber. Each ring is made up of eight different subunits: TCP1/CCT1, CCT2, CCT3, CCT4, CCT5, CCT6A/CCT6, CCT7, CCT8. Interacts with PACRG. Interacts with DLEC1.

The protein resides in the cytoplasm. It catalyses the reaction ATP + H2O = ADP + phosphate + H(+). Component of the chaperonin-containing T-complex (TRiC), a molecular chaperone complex that assists the folding of actin, tubulin and other proteins upon ATP hydrolysis. The TRiC complex mediates the folding of WRAP53/TCAB1, thereby regulating telomere maintenance. In Homo sapiens (Human), this protein is T-complex protein 1 subunit eta (CCT7).